The following is a 291-amino-acid chain: MKTGRIIKSISGVYRVDVDGEMYDTKPRGLFRKNKFSPIVGDVVDFEVENVTEGYIHHVHERKNEIKRPPVSNVDHLIIVMSAVEPDFSTQLLDRFLVIAHSYHMRPRILVTKKDLTSLEKQHDIEKLLEVYENMSYKTQFISINEDIEQVFSSWGDGLAVLSGQSGVGKSTLLNKYFPNIEIETQHISKALNRGRHTTRHVELFERAKGFIADTPGFSALDYDHIQKDEIKNYFMEIHEYGATCKFRDCNHINEPKCNVKAELENGNIAQFRYDHYLQLFKEISNRKERY.

The CP-type G domain occupies 63 to 221 (KNEIKRPPVS…IADTPGFSAL (159 aa)). GTP-binding positions include 112-115 (TKKD) and 164-172 (GQSGVGKST). Zn(2+) contacts are provided by cysteine 245, cysteine 250, histidine 252, and cysteine 258.

It belongs to the TRAFAC class YlqF/YawG GTPase family. RsgA subfamily. As to quaternary structure, monomer. Associates with 30S ribosomal subunit, binds 16S rRNA. The cofactor is Zn(2+).

The protein localises to the cytoplasm. One of several proteins that assist in the late maturation steps of the functional core of the 30S ribosomal subunit. Helps release RbfA from mature subunits. May play a role in the assembly of ribosomal proteins into the subunit. Circularly permuted GTPase that catalyzes slow GTP hydrolysis, GTPase activity is stimulated by the 30S ribosomal subunit. In Staphylococcus saprophyticus subsp. saprophyticus (strain ATCC 15305 / DSM 20229 / NCIMB 8711 / NCTC 7292 / S-41), this protein is Small ribosomal subunit biogenesis GTPase RsgA.